The sequence spans 84 residues: Large ribosomal subunit protein bL27 (84 aa).

Residues 1 to 21 (MAHKKGASSTRNGRDSNAQRL) form a disordered region. Residues 7–19 (ASSTRNGRDSNAQ) show a composition bias toward polar residues.

It belongs to the bacterial ribosomal protein bL27 family.

The sequence is that of Large ribosomal subunit protein bL27 from Clavibacter sepedonicus (Clavibacter michiganensis subsp. sepedonicus).